A 395-amino-acid polypeptide reads, in one-letter code: Pyruvate synthase subunit PorA (395 aa).

As to quaternary structure, heterotetramer of one alpha, one beta, one delta and one gamma chain.

It carries out the reaction 2 oxidized [2Fe-2S]-[ferredoxin] + pyruvate + CoA = 2 reduced [2Fe-2S]-[ferredoxin] + acetyl-CoA + CO2 + H(+). In Pyrococcus horikoshii (strain ATCC 700860 / DSM 12428 / JCM 9974 / NBRC 100139 / OT-3), this protein is Pyruvate synthase subunit PorA (porA).